Here is a 691-residue protein sequence, read N- to C-terminus: Elongation factor G (691 aa).

The 275-residue stretch at 8 to 282 (ERVRNIGIAA…AVVDYLPAPI (275 aa)) folds into the tr-type G domain. GTP is bound by residues 17-24 (AHIDAGKT), 81-85 (DTPGH), and 135-138 (NKMD).

The protein belongs to the TRAFAC class translation factor GTPase superfamily. Classic translation factor GTPase family. EF-G/EF-2 subfamily.

It is found in the cytoplasm. Catalyzes the GTP-dependent ribosomal translocation step during translation elongation. During this step, the ribosome changes from the pre-translocational (PRE) to the post-translocational (POST) state as the newly formed A-site-bound peptidyl-tRNA and P-site-bound deacylated tRNA move to the P and E sites, respectively. Catalyzes the coordinated movement of the two tRNA molecules, the mRNA and conformational changes in the ribosome. This Synechococcus sp. (strain WH7803) protein is Elongation factor G.